We begin with the raw amino-acid sequence, 177 residues long: Large ribosomal subunit protein uL6 (177 aa).

Belongs to the universal ribosomal protein uL6 family. Part of the 50S ribosomal subunit.

In terms of biological role, this protein binds to the 23S rRNA, and is important in its secondary structure. It is located near the subunit interface in the base of the L7/L12 stalk, and near the tRNA binding site of the peptidyltransferase center. This Allorhizobium ampelinum (strain ATCC BAA-846 / DSM 112012 / S4) (Agrobacterium vitis (strain S4)) protein is Large ribosomal subunit protein uL6.